The chain runs to 294 residues: Single-stranded nucleic acid-binding protein (294 aa).

A disordered region spans residues 1–30 (MSAEIEEATNAVNNLSINDSEQQPRAPTHK). An N-acetylserine modification is found at serine 2. Phosphoserine occurs at positions 2 and 16. Residues 10-25 (NAVNNLSINDSEQQPR) show a composition bias toward polar residues. The region spanning 37 to 119 (DTIFIGNVAH…REIHIKRART (83 aa)) is the RRM 1 domain. The residue at position 49 (threonine 49) is a Phosphothreonine. Serine 66 carries the phosphoserine modification. 2 positions are modified to phosphothreonine: threonine 91 and threonine 119. Arginine 125 is subject to Omega-N-methylarginine. The tract at residues 131-151 (RGGFRGRGGFRGGFRGGYRGG) is RNA-binding RGG-box. A dimethylated arginine mark is found at arginine 135, arginine 137, and arginine 141. A Dimethylated arginine; alternate modification is found at arginine 145. Omega-N-methylarginine; alternate is present on arginine 145. Residue arginine 149 is modified to Omega-N-methylarginine. Residues 151–169 (GFRGRGNFRGRGGARGGFN) are compositionally biased toward gly residues. Residues 151-171 (GFRGRGNFRGRGGARGGFNGQ) are disordered. Dimethylated arginine is present on residues arginine 153, arginine 155, and arginine 159. Arginine 161 and arginine 165 each carry dimethylated arginine; alternate. Arginine 161 and arginine 165 each carry omega-N-methylarginine; alternate. An RRM 2 domain is found at 186–274 (DTLYINNVPF…RELTVDVAVI (89 aa)). Threonine 242 carries the post-translational modification Phosphothreonine. Residue serine 244 is modified to Phosphoserine. Positions 275 to 294 (RPENDEEEIEQETGSEEKQE) are disordered. Over residues 278-288 (NDEEEIEQETG) the composition is skewed to acidic residues. The residue at position 287 (threonine 287) is a Phosphothreonine. Serine 289 carries the phosphoserine modification.

It belongs to the RRM GAR family. Associated with snR10 and snR11 small nuclear RNAs.

Its subcellular location is the cytoplasm. The protein localises to the nucleus. The protein resides in the nucleolus. It is found in the P-body. It localises to the stress granule. In terms of biological role, functions in the transition of mRNAs from translation to an mRNP complex destined for decapping. High-copy-number suppressor of decapping defects. Overexpression suppresses decapping defects in both DCP1-2 and DCP2-7 mutations. Acts to promote translational repression of mRNA in conjunction with DHH1 and subsequent mRNA localization to P bodies. Promotes translational repression of mRNA during glucose deprivation. In Saccharomyces cerevisiae (strain ATCC 204508 / S288c) (Baker's yeast), this protein is Single-stranded nucleic acid-binding protein (SBP1).